A 160-amino-acid polypeptide reads, in one-letter code: Transcription elongation factor GreA (160 aa).

A coiled-coil region spans residues 1 to 71 (MAEKTYPMTL…GQISTLETKI (71 aa)).

It belongs to the GreA/GreB family.

In terms of biological role, necessary for efficient RNA polymerase transcription elongation past template-encoded arresting sites. The arresting sites in DNA have the property of trapping a certain fraction of elongating RNA polymerases that pass through, resulting in locked ternary complexes. Cleavage of the nascent transcript by cleavage factors such as GreA or GreB allows the resumption of elongation from the new 3'terminus. GreA releases sequences of 2 to 3 nucleotides. In Streptococcus pyogenes serotype M3 (strain ATCC BAA-595 / MGAS315), this protein is Transcription elongation factor GreA.